Here is a 523-residue protein sequence, read N- to C-terminus: ATP synthase subunit alpha (523 aa).

179 to 186 (GDRQTGKT) is a binding site for ATP.

This sequence belongs to the ATPase alpha/beta chains family. F-type ATPases have 2 components, CF(1) - the catalytic core - and CF(0) - the membrane proton channel. CF(1) has five subunits: alpha(3), beta(3), gamma(1), delta(1), epsilon(1). CF(0) has three main subunits: a(1), b(2) and c(9-12). The alpha and beta chains form an alternating ring which encloses part of the gamma chain. CF(1) is attached to CF(0) by a central stalk formed by the gamma and epsilon chains, while a peripheral stalk is formed by the delta and b chains.

Its subcellular location is the cell inner membrane. It catalyses the reaction ATP + H2O + 4 H(+)(in) = ADP + phosphate + 5 H(+)(out). Functionally, produces ATP from ADP in the presence of a proton gradient across the membrane. The alpha chain is a regulatory subunit. This chain is ATP synthase subunit alpha, found in Vibrio parahaemolyticus serotype O3:K6 (strain RIMD 2210633).